Here is a 264-residue protein sequence, read N- to C-terminus: 5'-nucleotidase SurE (264 aa).

Asp-10, Asp-11, Ser-43, and Asn-99 together coordinate a divalent metal cation.

Belongs to the SurE nucleotidase family. Requires a divalent metal cation as cofactor.

It is found in the cytoplasm. The catalysed reaction is a ribonucleoside 5'-phosphate + H2O = a ribonucleoside + phosphate. Functionally, nucleotidase that shows phosphatase activity on nucleoside 5'-monophosphates. This Methanococcus maripaludis (strain C7 / ATCC BAA-1331) protein is 5'-nucleotidase SurE.